The primary structure comprises 336 residues: F420-dependent glucose-6-phosphate dehydrogenase (336 aa).

Aspartate 39 lines the coenzyme F420-(gamma-Glu)n pocket. Histidine 40 serves as the catalytic Proton donor. Coenzyme F420-(gamma-Glu)n-binding positions include threonine 76 and 107–108; that span reads SG. Catalysis depends on glutamate 109, which acts as the Proton acceptor. Coenzyme F420-(gamma-Glu)n is bound by residues asparagine 112, 177–178, and 180–181; these read GG and VV. The substrate site is built by threonine 195, lysine 198, lysine 259, and arginine 283.

The protein belongs to the F420-dependent glucose-6-phosphate dehydrogenase family. Homodimer.

The catalysed reaction is oxidized coenzyme F420-(gamma-L-Glu)(n) + D-glucose 6-phosphate + H(+) = 6-phospho-D-glucono-1,5-lactone + reduced coenzyme F420-(gamma-L-Glu)(n). Its function is as follows. Catalyzes the coenzyme F420-dependent oxidation of glucose 6-phosphate (G6P) to 6-phosphogluconolactone. The polypeptide is F420-dependent glucose-6-phosphate dehydrogenase (Tsukamurella paurometabola (strain ATCC 8368 / DSM 20162 / CCUG 35730 / CIP 100753 / JCM 10117 / KCTC 9821 / NBRC 16120 / NCIMB 702349 / NCTC 13040) (Corynebacterium paurometabolum)).